Reading from the N-terminus, the 440-residue chain is Protein disulfide-isomerase A6 (440 aa).

Residues 1–19 (MALLVLGLVSCTFFLAVNG) form the signal peptide. Thioredoxin domains are found at residues 20–133 (LYSS…ALRQ) and 154–287 (SDSS…EDIA). Catalysis depends on nucleophile residues cysteine 55 and cysteine 58. Cysteines 55 and 58 form a disulfide. Serine 129 is modified (phosphoserine). Residues 141-161 (GRSGGYSSGKQGRSDSSSKKD) are disordered. Residues 152-161 (GRSDSSSKKD) are compositionally biased toward basic and acidic residues. Serine 156 carries the phosphoserine; by FAM20C modification. A Phosphoserine modification is found at serine 158. Residues cysteine 190 and cysteine 193 each act as nucleophile in the active site. Cysteine 190 and cysteine 193 are joined by a disulfide. Position 428 is a phosphoserine (serine 428). A Prevents secretion from ER motif is present at residues 437–440 (KDEL).

This sequence belongs to the protein disulfide isomerase family. As to quaternary structure, part of a large chaperone multiprotein complex comprising DNAJB11, HSP90B1, HSPA5, HYOU, PDIA2, PDIA4, PDIA6, PPIB, SDF2L1, UGGT1 and very small amounts of ERP29, but not, or at very low levels, CALR nor CANX. Interacts with MICA on the surface of tumor cells, leading to MICA disulfide bond reduction which is required for its release from tumor cells. Interacts with ITGB3 following platelet stimulation. Interacts with ERN1; the interaction is direct. Interacts with EIF2AK3. As to expression, expressed in platelets (at protein level).

Its subcellular location is the endoplasmic reticulum lumen. The protein resides in the cell membrane. The protein localises to the melanosome. The enzyme catalyses Catalyzes the rearrangement of -S-S- bonds in proteins.. Its function is as follows. May function as a chaperone that inhibits aggregation of misfolded proteins. Negatively regulates the unfolded protein response (UPR) through binding to UPR sensors such as ERN1, which in turn inactivates ERN1 signaling. May also regulate the UPR via the EIF2AK3 UPR sensor. Plays a role in platelet aggregation and activation by agonists such as convulxin, collagen and thrombin. This is Protein disulfide-isomerase A6 (PDIA6) from Homo sapiens (Human).